A 216-amino-acid chain; its full sequence is Large ribosomal subunit protein uL3 (216 aa).

Residues 137 to 158 (GASHGAHKNHRKPGSIGGASTP) are disordered.

The protein belongs to the universal ribosomal protein uL3 family. In terms of assembly, part of the 50S ribosomal subunit. Forms a cluster with proteins L14 and L19.

Functionally, one of the primary rRNA binding proteins, it binds directly near the 3'-end of the 23S rRNA, where it nucleates assembly of the 50S subunit. The polypeptide is Large ribosomal subunit protein uL3 (Pseudarthrobacter chlorophenolicus (strain ATCC 700700 / DSM 12829 / CIP 107037 / JCM 12360 / KCTC 9906 / NCIMB 13794 / A6) (Arthrobacter chlorophenolicus)).